A 231-amino-acid polypeptide reads, in one-letter code: UPF0653 protein C607.02c (231 aa).

Disordered stretches follow at residues 1–33 (MPTKTKKRSVLEAERKKIGLDHAPKEDESVDDN), 47–68 (YHESKKKEIKKGNLKNKKKKDY), 93–132 (SFKSGPSKIDEFTDKKEKKKIAKRKEKRERDWNEIEENFE), and 147–178 (IESRKKRKNSPDPWANLQTKPSFGETVQAPPE). The span at 9–27 (SVLEAERKKIGLDHAPKED) shows a compositional bias: basic and acidic residues. 2 stretches are compositionally biased toward basic residues: residues 53–67 (KEIKKGNLKNKKKKD) and 109–119 (EKKKIAKRKEK).

This sequence belongs to the UPF0653 family.

It localises to the nucleus. The protein localises to the nucleolus. The protein is UPF0653 protein C607.02c of Schizosaccharomyces pombe (strain 972 / ATCC 24843) (Fission yeast).